An 866-amino-acid chain; its full sequence is Coiled-coil domain-containing protein 178 (866 aa).

The tract at residues 1–21 (MPENEKEPAQPTTNEDALDTG) is disordered. 6 coiled-coil regions span residues 157 to 266 (ELKK…DYMA), 292 to 403 (EVME…DQYC), 439 to 480 (KDLT…EEEV), 514 to 539 (KTEE…LKKL), 570 to 631 (RRQV…LLKK), and 665 to 705 (EKCI…REHV).

This chain is Coiled-coil domain-containing protein 178 (Ccdc178), found in Mus musculus (Mouse).